A 340-amino-acid polypeptide reads, in one-letter code: Phenylalanine--tRNA ligase alpha subunit (340 aa).

Glutamate 258 contributes to the Mg(2+) binding site.

Belongs to the class-II aminoacyl-tRNA synthetase family. Phe-tRNA synthetase alpha subunit type 1 subfamily. Tetramer of two alpha and two beta subunits. Requires Mg(2+) as cofactor.

It localises to the cytoplasm. It catalyses the reaction tRNA(Phe) + L-phenylalanine + ATP = L-phenylalanyl-tRNA(Phe) + AMP + diphosphate + H(+). In Corynebacterium efficiens (strain DSM 44549 / YS-314 / AJ 12310 / JCM 11189 / NBRC 100395), this protein is Phenylalanine--tRNA ligase alpha subunit.